The sequence spans 1012 residues: Vacuolar membrane protease (1012 aa).

Residues 1–60 (MRRSTDPRNLLVRRGPLLVDGESAISELDPGFFPTGDAPKMSSTTRRRFNLIAFTPGPVT) are Cytoplasmic-facing. The helical transmembrane segment at 61–81 (VISSLVYLALLIPLLLVHTIV) threads the bilayer. Over 82–432 (PSAPKSNPKG…SFAVFRLHTL (351 aa)) the chain is Vacuolar. N159 carries N-linked (GlcNAc...) asparagine glycosylation. 2 residues coordinate Zn(2+): H215 and D227. E261 functions as the Proton acceptor in the catalytic mechanism. 3 residues coordinate Zn(2+): E262, E287, and H360. The helical transmembrane segment at 433-453 (FAISVTLLVVCPIVLFVIGII) threads the bilayer. Topologically, residues 454–487 (LSKMDKMYLFSIHETIPETKEKVSVRGLRGLFRY) are cytoplasmic. Residues 488–508 (PIILVVSSGILIGLSYLLAKV) traverse the membrane as a helical segment. Residues 509–518 (NPFIVHSSSY) are Vacuolar-facing. Residues 519–539 (AVWSMMLSSWIFMTWFLSCIA) traverse the membrane as a helical segment. At 540–550 (DFFRPSALHRA) the chain is on the cytoplasmic side. The helical transmembrane segment at 551-571 (YTFTWQLLVMWVLLVISTVYV) threads the bilayer. At 572–575 (NQHD) the chain is on the vacuolar side. A helical membrane pass occupies residues 576–596 (IAAGYFIVFYFAGTFLATLIS). Topologically, residues 597-710 (YLELFALPNK…WSASLPTWTW (114 aa)) are cytoplasmic. A compositionally biased stretch (polar residues) spans 614–629 (SQYPSRLGSNRSSRIL). A disordered region spans residues 614–660 (SQYPSRLGSNRSSRILSPSADELPTGGDNNGEIYDGEEEPTESSSLL). Residues 711-731 (VLQFLFVGPVVIMFIGQLGLF) form a helical membrane-spanning segment. Topologically, residues 732–743 (LTSAMNQVGADG) are vacuolar. A helical transmembrane segment spans residues 744-764 (VGLLVVYIAIAVFSVLLLIPL). At 765-777 (SPFIHRFTYHVPT) the chain is on the cytoplasmic side. The helical transmembrane segment at 778 to 798 (FLLLVFIATLIYNLAAFPFSA) threads the bilayer. The Vacuolar portion of the chain corresponds to 799–1012 (ENRLKIFFVQ…DGLVEVSRGF (214 aa)). N842 and N878 each carry an N-linked (GlcNAc...) asparagine glycan.

This sequence belongs to the peptidase M28 family. The cofactor is Zn(2+).

It localises to the vacuole membrane. Functionally, may be involved in vacuolar sorting and osmoregulation. This is Vacuolar membrane protease from Coccidioides posadasii (strain C735) (Valley fever fungus).